Here is a 360-residue protein sequence, read N- to C-terminus: MLVWLAEWLTPHLSFFHVVSYLTFRAIMSILTGLGFALWIGPRLIRRLQLLQIGQVVRNDGPESHFSKAGTPTMGGIMILLSIFLSVILWARLSNPYVWVVLFVLVSFGTIGFIDDYRKVIRKNPDGLIARWKYFWQSAAALVVAFFLYATATTDAQTVLVVPFFKDIMPQLGLLFILMTYFVIVGASNAVNLTDGLDGLAIMPTVMVAAGFALIAWATGNVNFANYLHIPYVANASELMVICTAIIGAGLGFLWFNTYPAQVFMGDVGSLALGAILGIIAVLVRQEFLLFIMGGVFVMETMSVILQVGSYKLRGQRIFRMAPIHHHYELKGWPEPRVIVRFWIITLVLVLLGLVTLKLR.

Transmembrane regions (helical) follow at residues 21 to 41, 71 to 91, 94 to 114, 142 to 162, 168 to 188, 199 to 219, 236 to 256, 263 to 283, 288 to 308, and 338 to 358; these read YLTF…LWIG, TPTM…ILWA, SNPY…IGFI, LVVA…VLVV, IMPQ…VGAS, GLAI…AWAT, ASEL…FLWF, VFMG…IAVL, FLLF…ILQV, and VIVR…VTLK.

The protein belongs to the glycosyltransferase 4 family. MraY subfamily. It depends on Mg(2+) as a cofactor.

Its subcellular location is the cell inner membrane. The catalysed reaction is UDP-N-acetyl-alpha-D-muramoyl-L-alanyl-gamma-D-glutamyl-meso-2,6-diaminopimeloyl-D-alanyl-D-alanine + di-trans,octa-cis-undecaprenyl phosphate = di-trans,octa-cis-undecaprenyl diphospho-N-acetyl-alpha-D-muramoyl-L-alanyl-D-glutamyl-meso-2,6-diaminopimeloyl-D-alanyl-D-alanine + UMP. The protein operates within cell wall biogenesis; peptidoglycan biosynthesis. In terms of biological role, catalyzes the initial step of the lipid cycle reactions in the biosynthesis of the cell wall peptidoglycan: transfers peptidoglycan precursor phospho-MurNAc-pentapeptide from UDP-MurNAc-pentapeptide onto the lipid carrier undecaprenyl phosphate, yielding undecaprenyl-pyrophosphoryl-MurNAc-pentapeptide, known as lipid I. The sequence is that of Phospho-N-acetylmuramoyl-pentapeptide-transferase from Tolumonas auensis (strain DSM 9187 / NBRC 110442 / TA 4).